The chain runs to 734 residues: Ribosomal RNA large subunit methyltransferase K/L (734 aa).

Positions 43–154 (VGYRSCLWSR…RNQLTLSLDL (112 aa)) constitute a THUMP domain.

It belongs to the methyltransferase superfamily. RlmKL family.

The protein resides in the cytoplasm. The catalysed reaction is guanosine(2445) in 23S rRNA + S-adenosyl-L-methionine = N(2)-methylguanosine(2445) in 23S rRNA + S-adenosyl-L-homocysteine + H(+). It carries out the reaction guanosine(2069) in 23S rRNA + S-adenosyl-L-methionine = N(2)-methylguanosine(2069) in 23S rRNA + S-adenosyl-L-homocysteine + H(+). Its function is as follows. Specifically methylates the guanine in position 2445 (m2G2445) and the guanine in position 2069 (m7G2069) of 23S rRNA. This chain is Ribosomal RNA large subunit methyltransferase K/L, found in Hydrogenovibrio crunogenus (strain DSM 25203 / XCL-2) (Thiomicrospira crunogena).